Consider the following 147-residue polypeptide: Hemoglobin subunit delta (147 aa).

Residues 3-147 (HLTADETALV…VANALAHKYH (145 aa)) form the Globin domain. Serine 51 is subject to Phosphoserine. Histidine 64 and histidine 93 together coordinate heme b.

This sequence belongs to the globin family. In terms of assembly, heterotetramer of two delta chains and two alpha chains. Red blood cells.

In Dugong dugon (Dugong), this protein is Hemoglobin subunit delta (HBD).